A 446-amino-acid chain; its full sequence is Nuclear envelope integral membrane protein 1 (446 aa).

Residues 1–37 (MAGFMKYKSVSTTIETVRLKLILTAVLFLFPFSQTSG) form the signal peptide. Asn62, Asn118, and Asn129 each carry an N-linked (GlcNAc...) asparagine glycan. The next 5 helical transmembrane spans lie at 154–174 (IYLFLVFLAGVLLFFYADVLS), 181–201 (YSAGMSTGMIASLLILIFIVY), 209–229 (PFYMLVVGGWSFSLYIIQLVF), 239–259 (HWHLAIGYVFVVGFISFAVCY), and 269–289 (SINILSWALQIFGLLLVYAGI). Residues 410 to 431 (LFSTDEEDKEEEEDGWETEDDI) show a composition bias toward acidic residues. Residues 410–446 (LFSTDEEDKEEEEDGWETEDDIKPEVTSPRMNNTRGK) form a disordered region. Asn441 carries an N-linked (GlcNAc...) asparagine glycan.

It belongs to the NEMP family.

It localises to the nucleus inner membrane. Functionally, contributes to nuclear envelope stiffness in germ cells. Involved in male and female fertility. Essential for normal erythropoiesis. Required for efficient nuclear envelope opening and enucleation during the late stages of erythroblast maturation. This Danio rerio (Zebrafish) protein is Nuclear envelope integral membrane protein 1.